A 287-amino-acid chain; its full sequence is Pyridoxal kinase PdxY (287 aa).

Substrate contacts are provided by residues Ser-10 and 45–46 (TQ). Residues Asp-112, Ala-144, Glu-149, Lys-182, and 209–212 (RPLV) each bind ATP. Asp-224 is a binding site for substrate.

This sequence belongs to the pyridoxine kinase family. PdxY subfamily. Homodimer. Mg(2+) is required as a cofactor.

The catalysed reaction is pyridoxal + ATP = pyridoxal 5'-phosphate + ADP + H(+). The protein operates within cofactor metabolism; pyridoxal 5'-phosphate salvage; pyridoxal 5'-phosphate from pyridoxal: step 1/1. Its function is as follows. Pyridoxal kinase involved in the salvage pathway of pyridoxal 5'-phosphate (PLP). Catalyzes the phosphorylation of pyridoxal to PLP. The chain is Pyridoxal kinase PdxY from Escherichia coli O157:H7.